The sequence spans 465 residues: Ribulose bisphosphate carboxylase large chain (465 aa).

An N6,N6,N6-trimethyllysine modification is found at Lys4. Residue Thr163 participates in substrate binding. Lys165 (proton acceptor) is an active-site residue. Lys167 is a substrate binding site. Mg(2+) contacts are provided by Lys191, Asp193, and Glu194. Position 191 is an N6-carboxylysine (Lys191). His284 functions as the Proton acceptor in the catalytic mechanism. Substrate contacts are provided by Arg285, His317, and Ser369.

Belongs to the RuBisCO large chain family. Type I subfamily. As to quaternary structure, heterohexadecamer of 8 large chains and 8 small chains; disulfide-linked. The disulfide link is formed within the large subunit homodimers. Mg(2+) serves as cofactor. Post-translationally, the disulfide bond which can form in the large chain dimeric partners within the hexadecamer appears to be associated with oxidative stress and protein turnover.

The protein localises to the plastid. The protein resides in the chloroplast. It catalyses the reaction 2 (2R)-3-phosphoglycerate + 2 H(+) = D-ribulose 1,5-bisphosphate + CO2 + H2O. It carries out the reaction D-ribulose 1,5-bisphosphate + O2 = 2-phosphoglycolate + (2R)-3-phosphoglycerate + 2 H(+). RuBisCO catalyzes two reactions: the carboxylation of D-ribulose 1,5-bisphosphate, the primary event in carbon dioxide fixation, as well as the oxidative fragmentation of the pentose substrate in the photorespiration process. Both reactions occur simultaneously and in competition at the same active site. In Trochodendron aralioides (Wheel tree), this protein is Ribulose bisphosphate carboxylase large chain.